A 910-amino-acid chain; its full sequence is MEIKHDYNVQLFKEKGFIRKQCKECNQYFWTLDPKRETCGDSPCDEYSFIGSSITNKEYTYNEMVKEFLNFFDKNGHTPIKRYPVSARRWRDDILLTIASIAVFQPWVTKGIVKPVANPLVIAQPCIRLNDIDNVGRTGRHMTCFTMGGHHAFNTDEDFKYWTDRTVELCYNFFTNLGIDGSSITFIESWWEGGGNAGPCYEVITHGVELATLVFMQYEKTEQGDYIEMPLKIVDTGYGLERFVWASKGTPTVYEAVFGDIIGKLMDDANINMNDIGPKILAESATLAGLMDIENVGDLRILRQKVAEKLNLDVNELDSILSPIENIYAIADHTRCLAFMLGDGIVPSNVKDGYLARLLVRKTLRYIKNVGLSLSLKDIVAMQLENLKEIYPELMDMKEYIMDVLEEEENKYIQTITKGKGAVERIAKSKDEITLDDLIELYDSKGLPPEVVRDIVEEINKKGSKNNKGNKTIKITVPDNFYTIVAERHEEKKEDSKSEKGENTAEKSTISINLDDIPETELLFYSNPYQKEVEAKILKIIGNVVILDKTVFYPEGGGQKYDIGLIGNKKIISVQKNNNGIVCHTVENTDGLNEEDTIIAKLNWENRLNLMRNHTATHIINAAASKVLGKHIWQTGSNVESNKARLDITHYKRITREEIKEIEKIANQIVLDAIPVKSTVMGRNEAEQKYGFKIYQGGVVPGNILRILDIEGVDVEACGGTHCQNTSEVGYIKILKTERIQDGVERLEYTSGINSVNEVSLMEDILLNASSIVGVPCENLPKTVNRFFEEWKEQKKIIEELHKKIGELEKGNLNDKFEKVGKYDLLVEKVEGAPKELMSIADNLVNEKDNSIVILLNNSGYILCKCGEKVEIKMGELLRKIAKGGGKDKMAQGKCADDIETLKSKVVGEL.

Residues 488 to 505 (RHEEKKEDSKSEKGENTA) show a composition bias toward basic and acidic residues. Positions 488 to 507 (RHEEKKEDSKSEKGENTAEK) are disordered. Residues histidine 614, histidine 618, cysteine 718, and histidine 722 each contribute to the Zn(2+) site.

It belongs to the class-II aminoacyl-tRNA synthetase family. Zn(2+) serves as cofactor.

The protein localises to the cytoplasm. It catalyses the reaction tRNA(Ala) + L-alanine + ATP = L-alanyl-tRNA(Ala) + AMP + diphosphate. In terms of biological role, catalyzes the attachment of alanine to tRNA(Ala) in a two-step reaction: alanine is first activated by ATP to form Ala-AMP and then transferred to the acceptor end of tRNA(Ala). Also edits incorrectly charged Ser-tRNA(Ala) and Gly-tRNA(Ala) via its editing domain. This chain is Alanine--tRNA ligase, found in Methanococcus aeolicus (strain ATCC BAA-1280 / DSM 17508 / OCM 812 / Nankai-3).